The chain runs to 115 residues: Large ribosomal subunit protein uL18 (115 aa).

Residues 1–24 (MISKPDKNKLRQKRHTRVRGKISG) form a disordered region. The segment covering 10-20 (LRQKRHTRVRG) has biased composition (basic residues).

This sequence belongs to the universal ribosomal protein uL18 family. In terms of assembly, part of the 50S ribosomal subunit; part of the 5S rRNA/L5/L18/L25 subcomplex. Contacts the 5S and 23S rRNAs.

This is one of the proteins that bind and probably mediate the attachment of the 5S RNA into the large ribosomal subunit, where it forms part of the central protuberance. This Lactococcus lactis subsp. cremoris (strain MG1363) protein is Large ribosomal subunit protein uL18.